The chain runs to 379 residues: Leukocyte elastase inhibitor (379 aa).

Met-1 is modified (N-acetylmethionine). Residues Lys-137 and Lys-177 each carry the N6-acetyllysine modification. The CARD-binding motif (CBM) stretch occupies residues 351-379; sequence NFNADHPFIFFIRHNPSANILFLGRFSSP.

The protein belongs to the serpin family. Ov-serpin subfamily. In terms of assembly, monomer. Interacts (via C-terminus) with CASP1; CASP4 (via CARD domain) and CASP5; these interactions regulate the activity of inflammatory caspases. Interacts with PRTN3. Interacts with GZMH. Interacts with TMSB4. In terms of processing, the N-terminus is blocked.

The protein resides in the secreted. It is found in the cytoplasm. It localises to the cytolytic granule. The protein localises to the early endosome. Neutrophil serine protease inhibitor that plays an essential role in the regulation of the innate immune response, inflammation and cellular homeostasis. Acts primarily to protect the cell from proteases released in the cytoplasm during stress or infection. These proteases are important in killing microbes but when released from granules, these potent enzymes also destroy host proteins and contribute to mortality. Regulates the activity of the neutrophil proteases elastase, cathepsin G, proteinase-3, chymase, chymotrypsin, and kallikrein-3. Also acts as a potent intracellular inhibitor of GZMH by directly blocking its proteolytic activity. During inflammation, limits the activity of inflammatory caspases CASP1, CASP4 and CASP5 by suppressing their caspase-recruitment domain (CARD) oligomerization and enzymatic activation. When secreted, promotes the proliferation of beta-cells via its protease inhibitory function. This chain is Leukocyte elastase inhibitor (SERPINB1), found in Equus caballus (Horse).